The chain runs to 502 residues: Carbon catabolite-derepressing protein kinase (502 aa).

In terms of domain architecture, Protein kinase spans 14-269 (YYLGKILGVG…IGEIRKHSWF (256 aa)). ATP-binding positions include 20–28 (LGVGTFAKV) and K43. The active-site Proton acceptor is the D140. T173 is subject to Phosphothreonine; by autocatalysis. The UBA domain maps to 290–330 (MIDEDTLRDVVKLGYDKDHVCESLCNRLQNEETVAYYLLLD). The KA1 domain occupies 453 to 501 (NSRLPAVIKFEIQLYKTKDDKYLLDMQRVTGPQLLFLEFCAAFLTNLRV).

This sequence belongs to the protein kinase superfamily. CAMK Ser/Thr protein kinase family. SNF1 subfamily.

It carries out the reaction L-seryl-[protein] + ATP = O-phospho-L-seryl-[protein] + ADP + H(+). The catalysed reaction is L-threonyl-[protein] + ATP = O-phospho-L-threonyl-[protein] + ADP + H(+). In terms of biological role, essential for release from glucose repression. The protein is Carbon catabolite-derepressing protein kinase (RKIN1) of Secale cereale (Rye).